We begin with the raw amino-acid sequence, 55 residues long: Conotoxin vc5b (55 aa).

Positions 1-15 (VILLLLIASAPSVDA) are cleaved as a signal peptide. The propeptide occupies 16–41 (QPKTKDDVPLAPLHDNAKSALQHLNQ). Residue Gln53 is modified to Glutamine amide.

Post-translationally, contains 2 disulfide bonds that can be either 'C1-C3, C2-C4' or 'C1-C4, C2-C3', since these disulfide connectivities have been observed for conotoxins with cysteine framework V (for examples, see AC P0DQQ7 and AC P81755). In terms of tissue distribution, expressed by the venom duct.

It localises to the secreted. The chain is Conotoxin vc5b from Conus victoriae (Queen Victoria cone).